The chain runs to 280 residues: MHKIQKMSCTPSVRSRYTLKRKRLNSAKSATLKKKKVFLSNSEFFAGVSTNYELGKDFLREMDTPICTSNTVFLPVKFSDVAPGRCLTLSPYGHSSVLGFHCQECKPDSSSGFTQAQQSAESNELLSVNLCFLNNVEKVVQHKAFYLSLLGHSMNTVKQSLGQPSLLYCYTVLKKFYPQIFPIFTANGPMLTMYIIFTSLTLHVSEAVLRILTDNVENHNLSADCYKGHYILSIEPQALEESNLNVCVTKICDLVAQLDFSDELKQEYVNGSTLIANFLN.

A CCCH-type zinc finger spans residues 86-203 (CLTLSPYGHS…YIIFTSLTLH (118 aa)).

The protein belongs to the herpesviridae NEC1 protein family. In terms of assembly, forms a heterohexameric complex with NEC2. Interacts with capsid vertex specific component 2/CVC2; this interaction directs the capsid to the host inner nuclear membrane to initiate budding. In terms of processing, phosphorylated at serine residues in the N-terminus. This phosphorylation regulates the localization within the inner nuclear membrane.

The protein localises to the host nucleus inner membrane. In terms of biological role, plays an essential role in virion nuclear egress, the first step of virion release from infected cell. Within the host nucleus, NEC1 interacts with the newly formed capsid through the vertexes and directs it to the inner nuclear membrane by associating with NEC2. Induces the budding of the capsid at the inner nuclear membrane as well as its envelopment into the perinuclear space. There, the NEC1/NEC2 complex promotes the fusion of the enveloped capsid with the outer nuclear membrane and the subsequent release of the viral capsid into the cytoplasm where it will reach the secondary budding sites in the host Golgi or trans-Golgi network. In Alcelaphine herpesvirus 1 (strain C500) (AlHV-1), this protein is Nuclear egress protein 1.